The primary structure comprises 156 residues: Ribosomal RNA large subunit methyltransferase H (156 aa).

Residues L72, G104, and 123–128 (LGPMTF) each bind S-adenosyl-L-methionine.

Belongs to the RNA methyltransferase RlmH family. Homodimer.

It is found in the cytoplasm. It carries out the reaction pseudouridine(1915) in 23S rRNA + S-adenosyl-L-methionine = N(3)-methylpseudouridine(1915) in 23S rRNA + S-adenosyl-L-homocysteine + H(+). In terms of biological role, specifically methylates the pseudouridine at position 1915 (m3Psi1915) in 23S rRNA. The sequence is that of Ribosomal RNA large subunit methyltransferase H from Nitratidesulfovibrio vulgaris (strain ATCC 29579 / DSM 644 / CCUG 34227 / NCIMB 8303 / VKM B-1760 / Hildenborough) (Desulfovibrio vulgaris).